The sequence spans 278 residues: tRNA (guanine-N(7)-)-methyltransferase (278 aa).

S-adenosyl-L-methionine contacts are provided by residues G95, 118–119 (EI), 153–154 (NA), and C173. Residue D176 is part of the active site. Residue 251-253 (TEE) coordinates S-adenosyl-L-methionine.

It belongs to the class I-like SAM-binding methyltransferase superfamily. TrmB family. In terms of assembly, forms a complex with TRM82.

It localises to the nucleus. The catalysed reaction is guanosine(46) in tRNA + S-adenosyl-L-methionine = N(7)-methylguanosine(46) in tRNA + S-adenosyl-L-homocysteine. It functions in the pathway tRNA modification; N(7)-methylguanine-tRNA biosynthesis. Catalyzes the formation of N(7)-methylguanine at position 46 (m7G46) in tRNA. This chain is tRNA (guanine-N(7)-)-methyltransferase, found in Kluyveromyces lactis (strain ATCC 8585 / CBS 2359 / DSM 70799 / NBRC 1267 / NRRL Y-1140 / WM37) (Yeast).